Reading from the N-terminus, the 147-residue chain is Hemoglobin subunit beta (147 aa).

Positions 3–147 (HWTPEEKQYI…VAHALALGYH (145 aa)) constitute a Globin domain. 2 residues coordinate heme b: histidine 64 and histidine 93.

Belongs to the globin family. As to quaternary structure, heterotetramer of two alpha-D chains and two beta chains. As to expression, red blood cells.

Its function is as follows. Involved in oxygen transport from the lung to the various peripheral tissues. This Chelonoidis niger (Galapagos giant tortoise) protein is Hemoglobin subunit beta (HBB).